The sequence spans 190 residues: Mitochondrial inner membrane protease subunit 1 (190 aa).

Residues Ser-40 and Lys-84 contribute to the active site.

Belongs to the peptidase S26 family. IMP1 subfamily. As to quaternary structure, component of the mitochondrial inner membrane peptidase (IMP) complex which at least consists of IMP1, IMP2 and SOM1.

The protein localises to the mitochondrion inner membrane. In terms of biological role, catalytic component of the mitochondrial inner membrane peptidase (IMP) complex. IMP catalyzes the removal of signal peptides required for the targeting of proteins from the mitochondrial matrix, across the inner membrane, into the inter-membrane space. The two catalytic IMP subunits seem to have non-overlapping substrate specificities. IMP1 substrates include nuclear encoded CYB2, mitochondrially encoded COX2, NADH-cytochrome b5 reductase and GUT2. This chain is Mitochondrial inner membrane protease subunit 1 (IMP1), found in Saccharomyces cerevisiae (strain ATCC 204508 / S288c) (Baker's yeast).